A 354-amino-acid polypeptide reads, in one-letter code: Uroporphyrinogen decarboxylase (354 aa).

Substrate-binding positions include 27–31 (RQAGR), Asp-77, Tyr-154, Thr-209, and His-327.

The protein belongs to the uroporphyrinogen decarboxylase family. In terms of assembly, homodimer.

It is found in the cytoplasm. It carries out the reaction uroporphyrinogen III + 4 H(+) = coproporphyrinogen III + 4 CO2. The protein operates within porphyrin-containing compound metabolism; protoporphyrin-IX biosynthesis; coproporphyrinogen-III from 5-aminolevulinate: step 4/4. In terms of biological role, catalyzes the decarboxylation of four acetate groups of uroporphyrinogen-III to yield coproporphyrinogen-III. The sequence is that of Uroporphyrinogen decarboxylase from Salmonella newport (strain SL254).